The primary structure comprises 482 residues: tRNA sulfurtransferase (482 aa).

The THUMP domain maps to L61–R165. Residues L183–I184, K265, G287, and Q296 contribute to the ATP site. A disulfide bridge connects residues C344 and C456. One can recognise a Rhodanese domain in the interval F404–P482. The active-site Cysteine persulfide intermediate is the C456.

It belongs to the ThiI family.

It localises to the cytoplasm. The enzyme catalyses [ThiI sulfur-carrier protein]-S-sulfanyl-L-cysteine + a uridine in tRNA + 2 reduced [2Fe-2S]-[ferredoxin] + ATP + H(+) = [ThiI sulfur-carrier protein]-L-cysteine + a 4-thiouridine in tRNA + 2 oxidized [2Fe-2S]-[ferredoxin] + AMP + diphosphate. It carries out the reaction [ThiS sulfur-carrier protein]-C-terminal Gly-Gly-AMP + S-sulfanyl-L-cysteinyl-[cysteine desulfurase] + AH2 = [ThiS sulfur-carrier protein]-C-terminal-Gly-aminoethanethioate + L-cysteinyl-[cysteine desulfurase] + A + AMP + 2 H(+). The protein operates within cofactor biosynthesis; thiamine diphosphate biosynthesis. Its function is as follows. Catalyzes the ATP-dependent transfer of a sulfur to tRNA to produce 4-thiouridine in position 8 of tRNAs, which functions as a near-UV photosensor. Also catalyzes the transfer of sulfur to the sulfur carrier protein ThiS, forming ThiS-thiocarboxylate. This is a step in the synthesis of thiazole, in the thiamine biosynthesis pathway. The sulfur is donated as persulfide by IscS. In Salmonella typhimurium (strain LT2 / SGSC1412 / ATCC 700720), this protein is tRNA sulfurtransferase.